Consider the following 183-residue polypeptide: Inner membrane-spanning protein YciB (183 aa).

Transmembrane regions (helical) follow at residues 19–39 (LYGV…QLIV), 53–73 (IMGI…DLNF), 76–96 (WKVT…QFVF), 121–141 (LGWA…SYYF), and 151–171 (TFGF…YLYP).

This sequence belongs to the YciB family.

The protein localises to the cell inner membrane. Its function is as follows. Plays a role in cell envelope biogenesis, maintenance of cell envelope integrity and membrane homeostasis. This Actinobacillus pleuropneumoniae serotype 3 (strain JL03) protein is Inner membrane-spanning protein YciB.